We begin with the raw amino-acid sequence, 3124 residues long: Collagen alpha-1(XII) chain (3124 aa).

An N-terminal signal peptide occupies residues 1-23 (MRTALCSAVAALCAAALLSSIEA). Residues 27 to 117 (PPSDLNFTII…GQLTIQTGGP (91 aa)) enclose the Fibronectin type-III 1 domain. A glycan (N-linked (GlcNAc...) asparagine) is linked at asparagine 32. In terms of domain architecture, VWFA 1 spans 139 to 311 (DLVFLVDGSW…DGIVDIQNEI (173 aa)). A glycan (O-linked (Xyl...) (chondroitin sulfate) serine) is linked at serine 328. The Fibronectin type-III 2 domain maps to 335 to 424 (PASNLVATQI…ITIMEKTQQV (90 aa)). Residues 439–615 (DVVFLVDGSY…RISFELTQSV (177 aa)) form the VWFA 2 domain. Fibronectin type-III domains are found at residues 633–722 (PAKN…LEVK), 724–815 (APRN…VRGN), 816–906 (PRNL…LEER), 908–998 (SPRN…VSQS), 999–1087 (ARTV…ASPF), and 1089–1179 (PPRN…TLSD). 3 O-linked (Xyl...) (chondroitin sulfate) serine glycosylation sites follow: serine 797, serine 890, and serine 981. N-linked (GlcNAc...) asparagine glycans are attached at residues asparagine 1006, asparagine 1032, and asparagine 1044. Residues 1075-1100 (KSRKAEGTTASPFKPPRNLRTSDSTM) form a disordered region. The region spanning 1199–1371 (DIVLLVDGSW…SFLASIGEDV (173 aa)) is the VWFA 3 domain. Fibronectin type-III domains follow at residues 1387–1476 (PPSN…YPLS), 1477–1568 (SVRN…LPLP), 1569–1659 (GPRG…VPSP), 1660–1756 (VNLR…TPAP), 1759–1853 (GPRN…TVKN), 1854–1939 (MLVY…LERG), 1940–2030 (TPRN…LPRS), 2031–2121 (GPRN…VGLL), 2122–2210 (PPQN…LYLN), and 2211–2299 (VTDL…LKPT). The N-linked (GlcNAc...) asparagine glycan is linked to asparagine 1512. N-linked (GlcNAc...) asparagine glycosylation is present at asparagine 1767. N-linked (GlcNAc...) asparagine glycans are attached at residues asparagine 2210 and asparagine 2273. Residues 2327–2500 (DIVFLTDASW…DAFEKIQDNL (174 aa)) form the VWFA 4 domain. Positions 2455-2750 (SGFSVFVVGV…NACTCTQDSV (296 aa)) are nonhelical region (NC3). Residues 2524–2716 (GFKMLESYNL…IQNFDIVCSP (193 aa)) form the Laminin G-like domain. Residues asparagine 2532 and asparagine 2683 are each glycosylated (N-linked (GlcNAc...) asparagine). 2 disordered regions span residues 2749 to 2900 (SVGP…GDRG) and 2935 to 3080 (PNDY…EGEP). Collagen-like domains lie at 2751 to 2802 (GPPG…GPNG), 2807 to 2858 (GEPG…GPRG), and 2859 to 2900 (PPGP…GDRG). The segment at 2751–2902 (GPPGPPGPPG…KGEKGDRGDI (152 aa)) is triple-helical region (COL2) with 1 imperfection. 2 stretches are compositionally biased toward pro residues: residues 2752-2761 (PPGPPGPPGG) and 2788-2798 (PPGPQGPPGPQ). The span at 2821 to 2830 (PGLPGRSGTP) shows a compositional bias: low complexity. The segment covering 2832–2841 (LPGPPGPVGP) has biased composition (pro residues). 2 stretches are compositionally biased toward low complexity: residues 2842–2854 (PGER…DGPT) and 2865–2878 (APGV…SGKP). A Cell attachment site motif is present at residues 2899-2901 (RGD). The segment at 2903–2945 (ASQNMMRAVARQVCEQLINGQMSRFNQMLNQIPNDYYSNRNQP) is nonhelical region (NC2). Positions 2935–2944 (PNDYYSNRNQ) are enriched in polar residues. The segment covering 2945 to 2954 (PGPPGPPGPP) has biased composition (pro residues). In terms of domain architecture, Collagen-like 4 spans 2945-2994 (PGPPGPPGPPGAAGTRGEPGPGGRPGFPGPPGVQGPPGERGMPGEKGERG). Residues 2946–3048 (GPPGPPGPPG…RGPPGPPGYC (103 aa)) form a triple-helical region (COL1) with 2 imperfections region. Residues 2961–2970 (GEPGPGGRPG) show a composition bias toward gly residues. Low complexity predominate over residues 3010-3024 (QGESRTGPPGSTGSR). Residues 3049–3124 (DSSQCASIPY…SLSRKAKRKP (76 aa)) form a nonhelical region (NC1) region.

The protein belongs to the fibril-associated collagens with interrupted helices (FACIT) family. In terms of assembly, trimer of identical chains each containing 190 kDa of non-triple-helical sequences. The triple-helical tail is stabilized by disulfide bonds at each end. Post-translationally, prolines at the third position of the tripeptide repeating unit (G-X-Y) are hydroxylated in some or all of the chains. In terms of processing, O-glycosylated; glycosaminoglycan of chondroitin-sulfate type. In terms of tissue distribution, type XII collagen is present in tendons, ligaments, perichondrium, and periosteum, all dense connective tissues containing type I collagen.

The protein resides in the secreted. It is found in the extracellular space. The protein localises to the extracellular matrix. Its function is as follows. Type XII collagen interacts with type I collagen-containing fibrils, the COL1 domain could be associated with the surface of the fibrils, and the COL2 and NC3 domains may be localized in the perifibrillar matrix. This is Collagen alpha-1(XII) chain (COL12A1) from Gallus gallus (Chicken).